Here is a 147-residue protein sequence, read N- to C-terminus: Ubiquitin-conjugating enzyme E2 D4 (147 aa).

The UBC core domain maps to 1 to 147 (MALKRIQKEL…AREWTQKYAM (147 aa)). The active-site Glycyl thioester intermediate is the Cys85.

This sequence belongs to the ubiquitin-conjugating enzyme family.

It carries out the reaction S-ubiquitinyl-[E1 ubiquitin-activating enzyme]-L-cysteine + [E2 ubiquitin-conjugating enzyme]-L-cysteine = [E1 ubiquitin-activating enzyme]-L-cysteine + S-ubiquitinyl-[E2 ubiquitin-conjugating enzyme]-L-cysteine.. The protein operates within protein modification; protein ubiquitination. Its function is as follows. Accepts ubiquitin from the E1 complex and catalyzes its covalent attachment to other proteins. In vitro able to promote polyubiquitination using all 7 ubiquitin Lys residues, but may prefer 'Lys-11' and 'Lys-48'-linked polyubiquitination. This Homo sapiens (Human) protein is Ubiquitin-conjugating enzyme E2 D4 (UBE2D4).